A 385-amino-acid chain; its full sequence is Non-structural maintenance of chromosomes element 4 homolog A (385 aa).

Positions 1 to 69 are disordered; it reads MSGDSSGRGP…PSDSGDEMMD (69 aa). Basic and acidic residues-rich tracts occupy residues 10-21 and 42-55; these read PEGRGRGRDPHR and SARERREAPERPSL. The span at 56-68 shows a compositional bias: acidic residues; that stretch reads EDTEPSDSGDEMM. Thr-345 bears the Phosphothreonine mark. Residue Ser-377 is modified to Phosphoserine.

It belongs to the NSE4 family. Component of the SMC5-SMC6 complex which consists at least of SMC5, SMC6, NSMCE2, NSMCE1, NSMCE4A or EID3 and NSMCE3. NSMCE1, NSMCE4A or EID3 and NSMCE3 probably form a subcomplex that bridges the head domains of the SMC5:SMC6 heterodimer. Interacts with NSMCE3.

It localises to the nucleus. It is found in the chromosome. The protein localises to the telomere. Component of the SMC5-SMC6 complex, a complex involved in DNA double-strand breaks by homologous recombination. The complex may promote sister chromatid homologous recombination by recruiting the SMC1-SMC3 cohesin complex to double-strand breaks. The complex is required for telomere maintenance via recombination in ALT (alternative lengthening of telomeres) cell lines and mediates sumoylation of shelterin complex (telosome) components which is proposed to lead to shelterin complex disassembly in ALT-associated PML bodies (APBs). Is involved in positive regulation of response to DNA damage stimulus. The polypeptide is Non-structural maintenance of chromosomes element 4 homolog A (NSMCE4A) (Homo sapiens (Human)).